Here is a 220-residue protein sequence, read N- to C-terminus: Ribosomal RNA large subunit methyltransferase E (220 aa).

5 residues coordinate S-adenosyl-L-methionine: glycine 60, tryptophan 62, aspartate 92, aspartate 108, and aspartate 133. Lysine 173 acts as the Proton acceptor in catalysis.

The protein belongs to the class I-like SAM-binding methyltransferase superfamily. RNA methyltransferase RlmE family.

It localises to the cytoplasm. The enzyme catalyses uridine(2552) in 23S rRNA + S-adenosyl-L-methionine = 2'-O-methyluridine(2552) in 23S rRNA + S-adenosyl-L-homocysteine + H(+). Specifically methylates the uridine in position 2552 of 23S rRNA at the 2'-O position of the ribose in the fully assembled 50S ribosomal subunit. In Paraburkholderia xenovorans (strain LB400), this protein is Ribosomal RNA large subunit methyltransferase E.